The primary structure comprises 2005 residues: Structural maintenance of chromosomes flexible hinge domain-containing protein 1 (2005 aa).

Over residues 1–13 the composition is skewed to gly residues; the sequence is MAAADGGGPGGAS. Residues 1-23 are disordered; it reads MAAADGGGPGGASVGTEEDGGGV. Alanine 2 is subject to N-acetylalanine. The segment at 111–702 is ATPase activity domain; it reads TKERIDFLPH…LSVTWPEGDE (592 aa). N6-acetyllysine is present on lysine 1349. Residues lysine 1374 and lysine 1496 each participate in a glycyl lysine isopeptide (Lys-Gly) (interchain with G-Cter in SUMO2) cross-link. Threonine 1499 carries the post-translational modification Phosphothreonine. In terms of domain architecture, SMC hinge spans 1720–1847; that stretch reads GDVLGKIAHL…DNLDAANHYR (128 aa). The residue at position 1802 (lysine 1802) is an N6-succinyllysine. The residue at position 1974 (serine 1974) is a Phosphoserine.

This sequence belongs to the SMC family. Highly divergent. As to quaternary structure, homodimer; homodimerizes via its SMC hinge domain. Interacts with LRIF1. Sumoylated with SUMO1.

It is found in the chromosome. It catalyses the reaction ATP + H2O = ADP + phosphate + H(+). Its function is as follows. Non-canonical member of the structural maintenance of chromosomes (SMC) protein family that plays a key role in epigenetic silencing by regulating chromatin architecture. Promotes heterochromatin formation in both autosomes and chromosome X, probably by mediating the merge of chromatin compartments. Plays a key role in chromosome X inactivation in females by promoting the spreading of heterochromatin. Recruited to inactivated chromosome X by Xist RNA and acts by mediating the merge of chromatin compartments: promotes random chromatin interactions that span the boundaries of existing structures, leading to create a compartment-less architecture typical of inactivated chromosome X. Required to facilitate Xist RNA spreading. Also required for silencing of a subset of clustered autosomal loci in somatic cells, such as the DUX4 locus. Has ATPase activity; may participate in structural manipulation of chromatin in an ATP-dependent manner as part of its role in gene expression regulation. Also plays a role in DNA repair: localizes to sites of DNA double-strand breaks in response to DNA damage to promote the repair of DNA double-strand breaks. Acts by promoting non-homologous end joining (NHEJ) and inhibiting homologous recombination (HR) repair. The sequence is that of Structural maintenance of chromosomes flexible hinge domain-containing protein 1 from Homo sapiens (Human).